Here is a 673-residue protein sequence, read N- to C-terminus: eEF1A lysine and N-terminal methyltransferase homolog (673 aa).

The protein belongs to the methyltransferase superfamily.

The enzyme catalyses L-lysyl-[protein] + S-adenosyl-L-methionine = N(6)-methyl-L-lysyl-[protein] + S-adenosyl-L-homocysteine + H(+). The catalysed reaction is N(6)-methyl-L-lysyl-[protein] + S-adenosyl-L-methionine = N(6),N(6)-dimethyl-L-lysyl-[protein] + S-adenosyl-L-homocysteine + H(+). It carries out the reaction N-terminal glycyl-L-lysyl-L-glutamyl-[protein] + 3 S-adenosyl-L-methionine = N-terminal N,N,N-trimethyl-glycyl-L-lysyl-L-glutamyl-[protein] + 3 S-adenosyl-L-homocysteine + 3 H(+). Functionally, dual methyltransferase. It catalyzes N-terminal methylation of target proteins via its C-terminus. It catalyzes dimethylation on lysine residues of target proteins via its N-terminus. The polypeptide is eEF1A lysine and N-terminal methyltransferase homolog (Drosophila pseudoobscura pseudoobscura (Fruit fly)).